A 451-amino-acid polypeptide reads, in one-letter code: uncharacterized protein (451 aa).

The TRAM domain maps to 1–59; it reads MLHKNDIIETEISDISHEGMGIAKVDGFVFFVENALPGEIIKMRVLKLRKRIGYGKVEE. S-adenosyl-L-methionine is bound by residues glutamine 283, tyrosine 312, glutamate 333, and aspartate 381. Cysteine 408 acts as the Nucleophile in catalysis.

This sequence belongs to the class I-like SAM-binding methyltransferase superfamily. RNA M5U methyltransferase family.

This is an uncharacterized protein from Streptococcus agalactiae serotype V (strain ATCC BAA-611 / 2603 V/R).